Consider the following 200-residue polypeptide: Imidazole glycerol phosphate synthase subunit HisH (200 aa).

The 198-residue stretch at 3–200 (DVALIDAGGA…LHNFLEMSFP (198 aa)) folds into the Glutamine amidotransferase type-1 domain. Catalysis depends on C78, which acts as the Nucleophile. Residues H179 and E181 contribute to the active site.

In terms of assembly, heterodimer of HisH and HisF.

Its subcellular location is the cytoplasm. It carries out the reaction 5-[(5-phospho-1-deoxy-D-ribulos-1-ylimino)methylamino]-1-(5-phospho-beta-D-ribosyl)imidazole-4-carboxamide + L-glutamine = D-erythro-1-(imidazol-4-yl)glycerol 3-phosphate + 5-amino-1-(5-phospho-beta-D-ribosyl)imidazole-4-carboxamide + L-glutamate + H(+). The catalysed reaction is L-glutamine + H2O = L-glutamate + NH4(+). Its pathway is amino-acid biosynthesis; L-histidine biosynthesis; L-histidine from 5-phospho-alpha-D-ribose 1-diphosphate: step 5/9. In terms of biological role, IGPS catalyzes the conversion of PRFAR and glutamine to IGP, AICAR and glutamate. The HisH subunit catalyzes the hydrolysis of glutamine to glutamate and ammonia as part of the synthesis of IGP and AICAR. The resulting ammonia molecule is channeled to the active site of HisF. In Xanthomonas oryzae pv. oryzae (strain MAFF 311018), this protein is Imidazole glycerol phosphate synthase subunit HisH.